The chain runs to 310 residues: Methionyl-tRNA formyltransferase (310 aa).

110-113 (SLLP) contributes to the (6S)-5,6,7,8-tetrahydrofolate binding site.

Belongs to the Fmt family.

It catalyses the reaction L-methionyl-tRNA(fMet) + (6R)-10-formyltetrahydrofolate = N-formyl-L-methionyl-tRNA(fMet) + (6S)-5,6,7,8-tetrahydrofolate + H(+). Functionally, attaches a formyl group to the free amino group of methionyl-tRNA(fMet). The formyl group appears to play a dual role in the initiator identity of N-formylmethionyl-tRNA by promoting its recognition by IF2 and preventing the misappropriation of this tRNA by the elongation apparatus. The protein is Methionyl-tRNA formyltransferase of Streptomyces coelicolor (strain ATCC BAA-471 / A3(2) / M145).